A 138-amino-acid polypeptide reads, in one-letter code: Large ribosomal subunit protein uL16 (138 aa).

Residues 1–13 (MLQPSRRKFRKEQ) are compositionally biased toward basic residues. The disordered stretch occupies residues 1–22 (MLQPSRRKFRKEQKGRNTGIAT).

It belongs to the universal ribosomal protein uL16 family. As to quaternary structure, part of the 50S ribosomal subunit.

Its function is as follows. Binds 23S rRNA and is also seen to make contacts with the A and possibly P site tRNAs. This chain is Large ribosomal subunit protein uL16, found in Methylibium petroleiphilum (strain ATCC BAA-1232 / LMG 22953 / PM1).